Consider the following 292-residue polypeptide: Poly-beta-1,6-N-acetyl-D-glucosamine N-deacetylase (292 aa).

The N-terminal stretch at 1-28 (MKYRKFIILVLSILIILPVSTLDGHHIA) is a signal peptide. The NodB homology domain occupies 114 to 292 (RSVWINFDDM…WDGFHEKDET (179 aa)).

It belongs to the polysaccharide deacetylase family.

It is found in the secreted. The protein localises to the cell wall. In terms of biological role, catalyzes the N-deacetylation of poly-beta-1,6-N-acetyl-D-glucosamine (PNAG, also referred to as PIA), a biofilm adhesin polysaccharide. N-deacetylation is crucial for attachment of the polysaccharide to the bacterial cell surface; it leads to the introduction of positive charges in the otherwise neutral PIA polymer, allowing electrostatic interactions. This Staphylococcus aureus (strain COL) protein is Poly-beta-1,6-N-acetyl-D-glucosamine N-deacetylase (icaB).